We begin with the raw amino-acid sequence, 485 residues long: Hexokinase-1 (485 aa).

The Hexokinase domain occupies 21-468 (KELMDEIHQL…SGAGAAVIAA (448 aa)). Residues 75 to 209 (TGKESGNYLA…ELPIEIVALI (135 aa)) are hexokinase small subdomain. Residues 86–91 (DLGGTN) and K111 contribute to the ATP site. Residues S158, 175–176 (TK), 210–211 (ND), and N237 contribute to the substrate site. The interval 210 to 457 (NDTVGTLIAS…DPITIVPAED (248 aa)) is hexokinase large subdomain. S245 carries the phosphoserine modification. E269 contributes to the substrate binding site. At S272 the chain carries Phosphoserine. E302 provides a ligand contact to substrate. ATP-binding positions include 307 to 308 (GY), 344 to 348 (TSYPA), and 419 to 423 (SVYNK).

It belongs to the hexokinase family. Homodimer.

It catalyses the reaction a D-hexose + ATP = a D-hexose 6-phosphate + ADP + H(+). It carries out the reaction D-fructose + ATP = D-fructose 6-phosphate + ADP + H(+). The enzyme catalyses D-glucose + ATP = D-glucose 6-phosphate + ADP + H(+). It participates in carbohydrate metabolism; hexose metabolism. Its pathway is carbohydrate degradation; glycolysis; D-glyceraldehyde 3-phosphate and glycerone phosphate from D-glucose: step 1/4. Subject to allosteric control. Substrate inhibition by ATP. Its function is as follows. Catalyzes the phosphorylation of hexose, such as D-glucose and D-fructose, to hexose 6-phosphate (D-glucose 6-phosphate and D-fructose 6-phosphate, respectively). Mediates the initial step of glycolysis by catalyzing phosphorylation of D-glucose to D-glucose 6-phosphate. This chain is Hexokinase-1 (HXK1), found in Saccharomyces cerevisiae (strain ATCC 204508 / S288c) (Baker's yeast).